Here is a 216-residue protein sequence, read N- to C-terminus: Phosphatidylserine decarboxylase proenzyme (216 aa).

The Schiff-base intermediate with substrate; via pyruvic acid role is filled by Ser182. Ser182 carries the post-translational modification Pyruvic acid (Ser); by autocatalysis.

It belongs to the phosphatidylserine decarboxylase family. PSD-A subfamily. In terms of assembly, heterodimer of a large membrane-associated beta subunit and a small pyruvoyl-containing alpha subunit. Pyruvate serves as cofactor. In terms of processing, is synthesized initially as an inactive proenzyme. Formation of the active enzyme involves a self-maturation process in which the active site pyruvoyl group is generated from an internal serine residue via an autocatalytic post-translational modification. Two non-identical subunits are generated from the proenzyme in this reaction, and the pyruvate is formed at the N-terminus of the alpha chain, which is derived from the carboxyl end of the proenzyme. The post-translation cleavage follows an unusual pathway, termed non-hydrolytic serinolysis, in which the side chain hydroxyl group of the serine supplies its oxygen atom to form the C-terminus of the beta chain, while the remainder of the serine residue undergoes an oxidative deamination to produce ammonia and the pyruvoyl prosthetic group on the alpha chain.

It is found in the cell membrane. It catalyses the reaction a 1,2-diacyl-sn-glycero-3-phospho-L-serine + H(+) = a 1,2-diacyl-sn-glycero-3-phosphoethanolamine + CO2. It participates in phospholipid metabolism; phosphatidylethanolamine biosynthesis; phosphatidylethanolamine from CDP-diacylglycerol: step 2/2. Its function is as follows. Catalyzes the formation of phosphatidylethanolamine (PtdEtn) from phosphatidylserine (PtdSer). The chain is Phosphatidylserine decarboxylase proenzyme from Burkholderia mallei (strain NCTC 10247).